The chain runs to 146 residues: MAAYLLAVAILFCIQGWPLGTVQGQVMPFMEVYRHSVCQTRETLVSILEEHPDEVSHIFRPSCVTALRCGGCCTDESLKCTATGKRSVGREIMRVDPHKGTSKTEVMQFTEHTDCECRPRSASGVNSRKHKRNPEEGEPRAKFPFV.

The N-terminal stretch at 1–24 (MAAYLLAVAILFCIQGWPLGTVQG) is a signal peptide. Q25 carries the post-translational modification Pyrrolidone carboxylic acid. 3 cysteine pairs are disulfide-bonded: C38–C80, C69–C115, and C73–C117. Residues 119-146 (PRSASGVNSRKHKRNPEEGEPRAKFPFV) form a disordered region. Residues 133 to 146 (NPEEGEPRAKFPFV) show a composition bias toward basic and acidic residues.

This sequence belongs to the PDGF/VEGF growth factor family. Snake venom VEGF subfamily. As to quaternary structure, homodimer; disulfide-linked. Interacts with VEGF receptor-1 (FLT1) with a high affinity, whereas it binds to VEGF receptor-2 (KDR) with a low affinity. Does not bind VEGF receptor-3 (FLT4). As to expression, expressed by the venom gland.

Its subcellular location is the secreted. In terms of biological role, snake venom VEGFs may contribute to venom dispersion and prey subjugation by inducing vascular permeability and hypotension. This protein induces vascular permeability probably through VEGF (VEGFR) signaling. This protein also induces a drastic hypotensive effect after intravenous injection. The hypotension is mediated by nitric oxide (NO), which is produced by VEGF-activated endothelium NO synthase. Also induces angiogenesis in vitro. Like other crotalid VEGFs, this protein interacts with VEGF receptor-1 (FLT1) with a high affinity, whereas it binds to VEGF receptor-2 (KDR) with a low affinity. The protein is Snake venom vascular endothelial growth factor toxin of Bothrops insularis (Golden lancehead).